A 342-amino-acid polypeptide reads, in one-letter code: GTPase Obg (342 aa).

Positions methionine 1–isoleucine 159 constitute an Obg domain. Residues alanine 160–aspartate 327 enclose the OBG-type G domain. GTP contacts are provided by residues glycine 166 to serine 173, phenylalanine 191 to histidine 195, aspartate 212 to glycine 215, serine 279 to aspartate 282, and serine 308 to alanine 310. Mg(2+) is bound by residues serine 173 and threonine 193.

This sequence belongs to the TRAFAC class OBG-HflX-like GTPase superfamily. OBG GTPase family. Monomer. The cofactor is Mg(2+).

The protein resides in the cytoplasm. Its function is as follows. An essential GTPase which binds GTP, GDP and possibly (p)ppGpp with moderate affinity, with high nucleotide exchange rates and a fairly low GTP hydrolysis rate. Plays a role in control of the cell cycle, stress response, ribosome biogenesis and in those bacteria that undergo differentiation, in morphogenesis control. The chain is GTPase Obg from Methylobacterium nodulans (strain LMG 21967 / CNCM I-2342 / ORS 2060).